The chain runs to 329 residues: NADH-quinone oxidoreductase subunit H (329 aa).

9 helical membrane-spanning segments follow: residues 9–29 (LIKI…ATYI), 42–62 (GPCY…IKLF), 75–95 (FIFT…MAPI), 117–137 (IGFL…ILAG), 154–174 (IQLL…LMVV), 188–208 (GGFL…FLIA), 238–258 (LKWG…SFVI), 269–291 (WGFI…LSMW), and 309–329 (WKIM…IILI).

It belongs to the complex I subunit 1 family. In terms of assembly, NDH-1 is composed of 14 different subunits. Subunits NuoA, H, J, K, L, M, N constitute the membrane sector of the complex.

It localises to the cell inner membrane. The catalysed reaction is a quinone + NADH + 5 H(+)(in) = a quinol + NAD(+) + 4 H(+)(out). Its function is as follows. NDH-1 shuttles electrons from NADH, via FMN and iron-sulfur (Fe-S) centers, to quinones in the respiratory chain. The immediate electron acceptor for the enzyme in this species is believed to be ubiquinone. Couples the redox reaction to proton translocation (for every two electrons transferred, four hydrogen ions are translocated across the cytoplasmic membrane), and thus conserves the redox energy in a proton gradient. This subunit may bind ubiquinone. This is NADH-quinone oxidoreductase subunit H from Helicobacter pylori (strain ATCC 700392 / 26695) (Campylobacter pylori).